We begin with the raw amino-acid sequence, 89 residues long: Acylphosphatase (89 aa).

Residues 3-89 (HIHLQVFGRV…NQKLSDFRSI (87 aa)) form the Acylphosphatase-like domain. Residues R18 and N36 contribute to the active site.

It belongs to the acylphosphatase family.

It carries out the reaction an acyl phosphate + H2O = a carboxylate + phosphate + H(+). The polypeptide is Acylphosphatase (acyP) (Staphylococcus aureus (strain Mu3 / ATCC 700698)).